Reading from the N-terminus, the 147-residue chain is MALRACGLIIFRRRLIPKVDNTAIEFLLLQASDGIHHWTPPKGHVEPGESDLETALRETQEEAGIEAGQLTIIEGFRRELSYVARAKPKIVIYWLAEVKDCDVEVRLSREHQAYRWLELEDACQLAQFEEMKAALQEGHQFLCSTAT.

Ala-2 carries the post-translational modification N-acetylalanine. Positions 2–139 (ALRACGLIIF…EMKAALQEGH (138 aa)) constitute a Nudix hydrolase domain. A Nudix box motif is present at residues 43 to 64 (GHVEPGESDLETALRETQEEAG).

The protein belongs to the Nudix hydrolase family. Requires a divalent metal cation as cofactor.

The enzyme catalyses P(1),P(4)-bis(5'-guanosyl) tetraphosphate + H2O = GMP + GTP + 2 H(+). It carries out the reaction a 5'-end CoA-ribonucleoside in mRNA + H2O = a 5'-end phospho-adenosine-phospho-ribonucleoside in mRNA + (R)-4'-phosphopantetheine + 2 H(+). It catalyses the reaction a 5'-end FAD-phospho-ribonucleoside in mRNA + H2O = a 5'-end phospho-adenosine-phospho-ribonucleoside in mRNA + FMN + 2 H(+). Its function is as follows. Catalyzes the asymmetric hydrolysis of diadenosine 5',5'''-P1,P4-tetraphosphate (Ap4A) to yield AMP and ATP. Exhibits decapping activity towards FAD-capped RNAs and dpCoA-capped RNAs in vitro. The sequence is that of Bis(5'-nucleosyl)-tetraphosphatase [asymmetrical] (NUDT2) from Bos taurus (Bovine).